Here is a 501-residue protein sequence, read N- to C-terminus: Probable cytosol aminopeptidase (501 aa).

Residues Lys270 and Asp275 each contribute to the Mn(2+) site. Lys282 is a catalytic residue. 3 residues coordinate Mn(2+): Asp293, Asp352, and Glu354. The active site involves Arg356.

This sequence belongs to the peptidase M17 family. The cofactor is Mn(2+).

It localises to the cytoplasm. It catalyses the reaction Release of an N-terminal amino acid, Xaa-|-Yaa-, in which Xaa is preferably Leu, but may be other amino acids including Pro although not Arg or Lys, and Yaa may be Pro. Amino acid amides and methyl esters are also readily hydrolyzed, but rates on arylamides are exceedingly low.. It carries out the reaction Release of an N-terminal amino acid, preferentially leucine, but not glutamic or aspartic acids.. Its function is as follows. Presumably involved in the processing and regular turnover of intracellular proteins. Catalyzes the removal of unsubstituted N-terminal amino acids from various peptides. The sequence is that of Probable cytosol aminopeptidase from Wigglesworthia glossinidia brevipalpis.